Here is a 347-residue protein sequence, read N- to C-terminus: MKRGRGTAIAFHSTIFIFKPAKCATLVIERGVVREIPVKLKGRPINSLNKESTYKYLGIQTGAGAKVSTMGLLEKVTRELDCIVRSDLIPPQKLDCVKTFALSKLTYMNSNSMPPITEMRKFANIVMRAVKVIHSIPIRGSPLEYVQLPIKDGGLGVPCPRVTNMVTFVVSTMKKLWSPDNYIRNLYMSFAEEVVKMETGKKEVNLEDIAQYLNVEQRTVRSNFGYNCFSRLKDALRNLASGGDSPLFKIKIVVKNKKLAVLVQATEDSNEKLFTEDGVKKMQRAMNEQVSRALKHRFHTTKLVKSEISRVVQMHPASNKFVARGGNLSLACHRFVHKARLNLLACN.

This is an uncharacterized protein from Caenorhabditis elegans.